Here is a 1097-residue protein sequence, read N- to C-terminus: Mitochondrial distribution and morphology protein 34 (1097 aa).

An SMP-LTD domain is found at 1 to 198 (MSFNFKWPTF…LPGIIHRLSQ (198 aa)). 8 disordered regions span residues 204-305 (EAKS…PLHS), 317-343 (AAFPDIENYDPTYGLRPDDLPTHSGFS), 390-427 (QSDDEGSEAEQSQDAHSSSHDGKHDEGDATTDSDLDAV), 480-520 (DDQP…TSSL), 556-600 (PEVD…SSRT), 645-675 (LDAERSSVSGSDSRRGLTNPTSRESSYRDLS), 716-817 (GQNA…SPGV), and 923-1097 (GSSA…AIRE). Residues 205–229 (AKSEKDKVKQKAEAEEPPARSREPT) show a composition bias toward basic and acidic residues. The span at 252–263 (RKSHSKAKKHSR) shows a compositional bias: basic residues. Positions 274–283 (SPCQSPQRPR) are enriched in low complexity. A compositionally biased stretch (basic residues) spans 284–293 (QSPRRPRHVA). Positions 406–416 (SSSHDGKHDEG) are enriched in basic and acidic residues. 2 stretches are compositionally biased toward low complexity: residues 508–519 (SSRSDRSACTSS) and 572–586 (GGTPSTRTGTTRFGS). The span at 662–675 (TNPTSRESSYRDLS) shows a compositional bias: polar residues. Positions 759–779 (GMSATPARTRASAAASARSRP) are enriched in low complexity. Polar residues predominate over residues 784 to 796 (YATSPPGDSSGWQ). Low complexity predominate over residues 923–943 (GSSAASGTGTTSGSSQTGANA). Residues 1004–1024 (SNKPNNTSTGQGEDSQDNSAA) are compositionally biased toward polar residues. The segment covering 1045–1059 (ASGSSASSAITDSSS) has biased composition (low complexity).

This sequence belongs to the MDM34 family. Component of the ER-mitochondria encounter structure (ERMES) or MDM complex, composed of MMM1, MDM10, MDM12 and MDM34.

Its subcellular location is the mitochondrion outer membrane. Component of the ERMES/MDM complex, which serves as a molecular tether to connect the endoplasmic reticulum (ER) and mitochondria. Components of this complex are involved in the control of mitochondrial shape and protein biogenesis, and function in nonvesicular lipid trafficking between the ER and mitochondria. MDM34 is required for the interaction of the ER-resident membrane protein MMM1 and the outer mitochondrial membrane-resident beta-barrel protein MDM10. The protein is Mitochondrial distribution and morphology protein 34 of Mycosarcoma maydis (Corn smut fungus).